The chain runs to 353 residues: Putative permease PerM (353 aa).

The next 7 helical transmembrane spans lie at 19-39 (IALL…SGLL), 72-92 (IVLV…LPIA), 156-176 (LVGL…VFFL), 217-237 (VLEM…FGLN), 240-260 (LLLA…AFVV), 281-301 (CFAV…PVLF), and 310-330 (LVII…GVFF).

Belongs to the autoinducer-2 exporter (AI-2E) (TC 2.A.86) family.

It is found in the cell membrane. The protein is Putative permease PerM (perM) of Escherichia coli O157:H7.